The chain runs to 317 residues: Methionyl-tRNA formyltransferase (317 aa).

Position 112–115 (112–115) interacts with (6S)-5,6,7,8-tetrahydrofolate; the sequence is SILP.

It belongs to the Fmt family.

It catalyses the reaction L-methionyl-tRNA(fMet) + (6R)-10-formyltetrahydrofolate = N-formyl-L-methionyl-tRNA(fMet) + (6S)-5,6,7,8-tetrahydrofolate + H(+). Attaches a formyl group to the free amino group of methionyl-tRNA(fMet). The formyl group appears to play a dual role in the initiator identity of N-formylmethionyl-tRNA by promoting its recognition by IF2 and preventing the misappropriation of this tRNA by the elongation apparatus. This is Methionyl-tRNA formyltransferase from Mannheimia succiniciproducens (strain KCTC 0769BP / MBEL55E).